Reading from the N-terminus, the 450-residue chain is Glutamyl-tRNA(Gln) amidotransferase subunit A, mitochondrial (450 aa).

Catalysis depends on charge relay system residues lysine 47 and serine 122. Serine 146 (acyl-ester intermediate) is an active-site residue.

It belongs to the amidase family. GatA subfamily. Subunit of the heterotrimeric GatFAB amidotransferase (AdT) complex, composed of A, B and F subunits.

It localises to the mitochondrion. It catalyses the reaction L-glutamyl-tRNA(Gln) + L-glutamine + ATP + H2O = L-glutaminyl-tRNA(Gln) + L-glutamate + ADP + phosphate + H(+). Allows the formation of correctly charged Gln-tRNA(Gln) through the transamidation of misacylated Glu-tRNA(Gln) in the mitochondria. The reaction takes place in the presence of glutamine and ATP through an activated gamma-phospho-Glu-tRNA(Gln). The chain is Glutamyl-tRNA(Gln) amidotransferase subunit A, mitochondrial from Candida albicans (strain SC5314 / ATCC MYA-2876) (Yeast).